Consider the following 581-residue polypeptide: Peptidyl-prolyl cis-trans isomerase FKBP10 (581 aa).

An N-terminal signal peptide occupies residues M1 to A33. PPIase FKBP-type domains are found at residues G61–W149, S173–H261, and G285–H373. N-linked (GlcNAc...) asparagine glycans are attached at residues N69, N181, N293, N309, N351, N392, and N406. The 88-residue stretch at G398 to E485 folds into the PPIase FKBP-type 4 domain. 2 consecutive EF-hand domains span residues W496–E531 and D541–R576. Ca(2+) contacts are provided by D509, N511, D513, E515, E520, D554, N556, D558, K560, and E565. A disordered region spans residues K533–L581. The segment covering R555–L581 has biased composition (basic and acidic residues). The short motif at H578 to L581 is the Prevents secretion from ER element.

In terms of processing, N-glycosylated. Phosphorylated. As to expression, expressed in aorta, brain, heart, kidney, lung, spleen and testis. Not detected in liver.

The protein resides in the endoplasmic reticulum lumen. The enzyme catalyses [protein]-peptidylproline (omega=180) = [protein]-peptidylproline (omega=0). Its activity is regulated as follows. Inhibited by both FK506 and rapamycin, but not by cyclosporin A. In terms of biological role, PPIases accelerate the folding of proteins during protein synthesis. This chain is Peptidyl-prolyl cis-trans isomerase FKBP10 (Fkbp10), found in Mus musculus (Mouse).